Reading from the N-terminus, the 660-residue chain is Leucine-rich repeat transmembrane protein FLRT2 (660 aa).

Residues 1-35 (MGLQTTKWPSHGAFFLKSWLIISLGLYSQVSKLLA) form the signal peptide. Disulfide bonds link cysteine 36-cysteine 42 and cysteine 40-cysteine 49. The LRRNT domain occupies 36 to 63 (CPSVCRCDRNFVYCNERSLTSVPLGIPE). Residues 36–541 (CPSVCRCDRN…TTSHSMGSPF (506 aa)) lie on the Extracellular side of the membrane. LRR repeat units follow at residues 64–85 (GVTVLYLHNNQINNAGFPAELH), 89–109 (SVHTVYLYGNQLDEFPMNLPK), 110–131 (NVRVLHLQENNIQTISRAALAQ), 134–155 (KLEELHLDDNSISTVGVEDGAF), 160–181 (SLKLLFLSKNHLSSVPVGLPVD), 182–202 (LQELRVDENRIAVISDMAFQN), 205–225 (SLERLIVDGNLLTNKGIAEGT), 231–252 (KLKEFSIVRNSLSHPPPDLPGT), 253–274 (HLIRLYLQDNQINHIPLTAFSN), and 277–298 (KLERLDISNNQLRMLTQGVFDN). Asparagine 202 is a glycosylation site (N-linked (GlcNAc...) asparagine). A glycan (N-linked (GlcNAc...) asparagine) is linked at asparagine 298. Residues 310-362 (NPWFCDCSIKWVTEWLKYIPSSLNVRGFMCQGPEQVRGMAVRELNMNLLSCPT) enclose the LRRCT domain. Cystine bridges form between cysteine 314–cysteine 339 and cysteine 316–cysteine 360. Over residues 373–409 (APSTASPTTQPPTLSIPNPSRSYTPPTPTTSKLPTIP) the composition is skewed to low complexity. The interval 373-413 (APSTASPTTQPPTLSIPNPSRSYTPPTPTTSKLPTIPDWDG) is disordered. The region spanning 419-517 (PPISERIQLS…ICSEATTHAS (99 aa)) is the Fibronectin type-III domain. N-linked (GlcNAc...) asparagine glycosylation is found at asparagine 433 and asparagine 521. The chain crosses the membrane as a helical span at residues 542–562 (LLAGLIGGAVIFVLVVLLSVF). Topologically, residues 563-660 (CWHMHKKGRY…SVPDLEHCHT (98 aa)) are cytoplasmic.

Self-associates (via leucine-rich repeats), giving rise to homooligomers. Interacts with FGFR1. Interacts with FGFR2. Interacts (via extracellular domain) with ADGRL1/LPHN1. Interacts (via extracellular domain) with ADGRL3 (via olfactomedin-like domain). Interacts (via extracellular domain) with UNC5D (via the first Ig-like domain). Can also interact (via extracellular domain) with UNC5B, but with much lower affinity. Interacts (via extracellular domain) with FN1. N-glycosylated. Post-translationally, proteolytic cleavage in the juxtamembrane region gives rise to a soluble ectodomain. Cleavage is probably effected by a metalloprotease. As to expression, expressed in pancreas, skeletal muscle, brain, and heart.

Its subcellular location is the cell membrane. The protein resides in the endoplasmic reticulum membrane. The protein localises to the cell junction. It localises to the focal adhesion. It is found in the secreted. Its subcellular location is the extracellular space. The protein resides in the extracellular matrix. The protein localises to the microsome membrane. It localises to the synapse. It is found in the synaptosome. In terms of biological role, functions in cell-cell adhesion, cell migration and axon guidance. Mediates cell-cell adhesion via its interactions with ADGRL3 and probably also other latrophilins that are expressed at the surface of adjacent cells. May play a role in the migration of cortical neurons during brain development via its interaction with UNC5D. Mediates axon growth cone collapse and plays a repulsive role in neuron guidance via its interaction with UNC5D, and possibly also other UNC-5 family members. Plays a role in fibroblast growth factor-mediated signaling cascades. Required for normal organization of the cardiac basement membrane during embryogenesis, and for normal embryonic epicardium and heart morphogenesis. This Homo sapiens (Human) protein is Leucine-rich repeat transmembrane protein FLRT2 (FLRT2).